The following is a 510-amino-acid chain: Kynurenine 3-monooxygenase (510 aa).

The protein belongs to the aromatic-ring hydroxylase family. KMO subfamily. FAD is required as a cofactor.

Its subcellular location is the mitochondrion outer membrane. It catalyses the reaction L-kynurenine + NADPH + O2 + H(+) = 3-hydroxy-L-kynurenine + NADP(+) + H2O. Its pathway is cofactor biosynthesis; NAD(+) biosynthesis; quinolinate from L-kynurenine: step 1/3. Functionally, catalyzes the hydroxylation of L-kynurenine (L-Kyn) to form 3-hydroxy-L-kynurenine (L-3OHKyn). Required for synthesis of quinolinic acid. The polypeptide is Kynurenine 3-monooxygenase (bna4) (Aspergillus oryzae (strain ATCC 42149 / RIB 40) (Yellow koji mold)).